Reading from the N-terminus, the 569-residue chain is Laccase-13 (569 aa).

Positions 1–21 (MEQLRPFFLLLAIFVASLVNA) are cleaved as a signal peptide. Plastocyanin-like domains are found at residues 29 to 145 (VIQE…PPLS) and 157 to 308 (REIT…YKDA). N-linked (GlcNAc...) asparagine glycosylation is present at asparagine 75. Histidine 79, histidine 81, histidine 124, and histidine 126 together coordinate Cu cation. Residues asparagine 186, asparagine 296, asparagine 330, asparagine 381, asparagine 391, and asparagine 432 are each glycosylated (N-linked (GlcNAc...) asparagine). A Plastocyanin-like 3 domain is found at 418-553 (DFPPTPPVTF…AMVFLVENGE (136 aa)). Residues histidine 470, histidine 473, histidine 475, histidine 532, cysteine 533, histidine 534, and histidine 538 each coordinate Cu cation.

It belongs to the multicopper oxidase family. Cu cation is required as a cofactor. Mostly expressed in roots. Also detected in leaves, stems and flowers but not in siliques.

It localises to the secreted. Its subcellular location is the extracellular space. The protein localises to the apoplast. It catalyses the reaction 4 hydroquinone + O2 = 4 benzosemiquinone + 2 H2O. Its function is as follows. Lignin degradation and detoxification of lignin-derived products. The protein is Laccase-13 (LAC13) of Arabidopsis thaliana (Mouse-ear cress).